The chain runs to 134 residues: Cytochrome b (134 aa).

3 helical membrane-spanning segments follow: residues 33–53 (FGSLLGVCLAVQILTGVFLAM), 77–98 (WVLRYLHANGASMFFICLYVHV), and 113–133 (WNVGILLLFAVMATAFMGYVL). Heme b-binding residues include His83 and His97.

The protein belongs to the cytochrome b family. The cytochrome bc1 complex contains 11 subunits: 3 respiratory subunits (MT-CYB, CYC1 and UQCRFS1), 2 core proteins (UQCRC1 and UQCRC2) and 6 low-molecular weight proteins (UQCRH/QCR6, UQCRB/QCR7, UQCRQ/QCR8, UQCR10/QCR9, UQCR11/QCR10 and a cleavage product of UQCRFS1). This cytochrome bc1 complex then forms a dimer. The cofactor is heme b.

Its subcellular location is the mitochondrion inner membrane. In terms of biological role, component of the ubiquinol-cytochrome c reductase complex (complex III or cytochrome b-c1 complex) that is part of the mitochondrial respiratory chain. The b-c1 complex mediates electron transfer from ubiquinol to cytochrome c. Contributes to the generation of a proton gradient across the mitochondrial membrane that is then used for ATP synthesis. This is Cytochrome b (MT-CYB) from Anoura caudifer (Hairy-legged long-tongued bat).